We begin with the raw amino-acid sequence, 476 residues long: Siroheme synthase (476 aa).

The precorrin-2 dehydrogenase /sirohydrochlorin ferrochelatase stretch occupies residues 1–203 (MHYFPVFADL…RQTEAAKKEL (203 aa)). NAD(+)-binding positions include 22-23 (GV) and 43-44 (QK). Ser128 is subject to Phosphoserine. Residues 214-476 (GFVSLVGAGP…LDSLRIESVA (263 aa)) form a uroporphyrinogen-III C-methyltransferase region. Pro223 contributes to the S-adenosyl-L-methionine binding site. Asp246 acts as the Proton acceptor in catalysis. The active-site Proton donor is Lys268. S-adenosyl-L-methionine contacts are provided by residues 299–301 (GGD), Val304, 329–330 (TA), Met381, and Gly410.

In the N-terminal section; belongs to the precorrin-2 dehydrogenase / sirohydrochlorin ferrochelatase family. The protein in the C-terminal section; belongs to the precorrin methyltransferase family.

The enzyme catalyses uroporphyrinogen III + 2 S-adenosyl-L-methionine = precorrin-2 + 2 S-adenosyl-L-homocysteine + H(+). It carries out the reaction precorrin-2 + NAD(+) = sirohydrochlorin + NADH + 2 H(+). The catalysed reaction is siroheme + 2 H(+) = sirohydrochlorin + Fe(2+). Its pathway is cofactor biosynthesis; adenosylcobalamin biosynthesis; precorrin-2 from uroporphyrinogen III: step 1/1. It functions in the pathway cofactor biosynthesis; adenosylcobalamin biosynthesis; sirohydrochlorin from precorrin-2: step 1/1. The protein operates within porphyrin-containing compound metabolism; siroheme biosynthesis; precorrin-2 from uroporphyrinogen III: step 1/1. It participates in porphyrin-containing compound metabolism; siroheme biosynthesis; siroheme from sirohydrochlorin: step 1/1. Its pathway is porphyrin-containing compound metabolism; siroheme biosynthesis; sirohydrochlorin from precorrin-2: step 1/1. Functionally, multifunctional enzyme that catalyzes the SAM-dependent methylations of uroporphyrinogen III at position C-2 and C-7 to form precorrin-2 via precorrin-1. Then it catalyzes the NAD-dependent ring dehydrogenation of precorrin-2 to yield sirohydrochlorin. Finally, it catalyzes the ferrochelation of sirohydrochlorin to yield siroheme. The sequence is that of Siroheme synthase from Actinobacillus succinogenes (strain ATCC 55618 / DSM 22257 / CCUG 43843 / 130Z).